The following is a 613-amino-acid chain: Zinc metalloproteinase-disintegrin-like atragin (613 aa).

A signal peptide spans 1-20; the sequence is MIQALLVIICLAVFPHQGSS. Residues 21–191 constitute a propeptide that is removed on maturation; that stretch reads IILESGNVND…DESIEKTSQL (171 aa). The region spanning 205 to 400 is the Peptidase M12B domain; sequence KYIEFYVVVD…DRPQCILNKP (196 aa). Ca(2+) is bound by residues glutamate 208 and aspartate 292. 2 disulfides stabilise this stretch: cysteine 316/cysteine 395 and cysteine 356/cysteine 379. Histidine 341, histidine 345, and histidine 351 together coordinate Zn(2+). Residues cysteine 395, asparagine 398, isoleucine 410, asparagine 413, phenylalanine 415, glutamate 417, glutamate 420, and aspartate 423 each contribute to the Ca(2+) site. Positions 408-494 constitute a Disintegrin domain; it reads PPICGNYFVE…ECPTDVFQRN (87 aa). Intrachain disulfides connect cysteine 411/cysteine 440, cysteine 422/cysteine 435, cysteine 424/cysteine 430, cysteine 434/cysteine 457, cysteine 448/cysteine 454, cysteine 453/cysteine 479, cysteine 466/cysteine 486, cysteine 473/cysteine 505, cysteine 498/cysteine 510, cysteine 517/cysteine 567, cysteine 532/cysteine 575, cysteine 542/cysteine 577, cysteine 545/cysteine 555, cysteine 562/cysteine 601, and cysteine 595/cysteine 606. Residue asparagine 436 is glycosylated (N-linked (GlcNAc...) asparagine). The D/ECD-tripeptide signature appears at 472–474; it reads DCD. Residues aspartate 474, leucine 475, glutamate 477, aspartate 489, and valine 490 each contribute to the Ca(2+) site. The interval 560–574 is hypervariable region that may play important roles toward cell migration; sequence VKCGRLFCKRRNSMI.

This sequence belongs to the venom metalloproteinase (M12B) family. P-III subfamily. P-IIIa sub-subfamily. In terms of assembly, monomer. Requires Zn(2+) as cofactor. Expressed by the venom gland.

It is found in the secreted. In terms of biological role, snake venom zinc metalloproteinase that seems to inhibit cell migration. This activity is dominated by the local structure of the hyper-variable region. In Naja atra (Chinese cobra), this protein is Zinc metalloproteinase-disintegrin-like atragin.